The sequence spans 773 residues: Elongin-A (773 aa).

The TFIIS N-terminal domain occupies 4 to 79 (ESALQVVEKL…AQWKKLVPVE (76 aa)). Residues 79 to 93 (ERNNEAEDQDFEKSN) are compositionally biased toward basic and acidic residues. The tract at residues 79–480 (ERNNEAEDQD…PRKVPTDVLP (402 aa)) is disordered. The segment covering 112 to 124 (YQESWQASGSQPY) has biased composition (polar residues). The segment covering 136-156 (LPELERPHKVAHGHERRDERK) has biased composition (basic and acidic residues). Low complexity predominate over residues 162–174 (SPPYSSDPESSDY). Ser-195 bears the Phosphoserine mark. Residues 239–248 (KPHKSSHKEK) are compositionally biased toward basic residues. 2 stretches are compositionally biased toward basic and acidic residues: residues 249 to 265 (RPVD…MGRE) and 271 to 304 (SSKE…EGNS). The residue at position 310 (Ser-310) is a Phosphoserine. 2 stretches are compositionally biased toward basic and acidic residues: residues 317 to 339 (SDNH…KNKQ) and 368 to 380 (QEGK…DRKS). Phosphoserine occurs at positions 380 and 383. Lys-430 carries the N6-acetyllysine modification. Ser-515 is modified (phosphoserine). The segment at 521 to 680 (EAGFTGRRMN…PPRDVRRRQE (160 aa)) is activation domain. The interval 549 to 558 (TLHQQCIRVL) is BC-box. Residues 565–609 (IFEVGGVPYSVLEPVLERCTPDQLYRIEECNHVLIEETDQLWKVH) form the F-box domain. Positions 671–747 (PPRDVRRRQE…VASSSVSYDP (77 aa)) are disordered. A compositionally biased stretch (low complexity) spans 704-718 (SSHVPASNSSSSFHS). Residues 728-744 (PSTSSAHLAPVASSSVS) are compositionally biased toward polar residues.

As to quaternary structure, heterotrimer of an A (ELOA, ELOA2 or ELOA3P), ELOB and ELOC subunit. Part of a multisubunit ubiquitin ligase complex consisting of elongin BC complex (ELOB and ELOC), elongin A/ELOA, RBX1 and CUL5. Interacts with ERCC6; the interaction is induced by DNA damaging agents or inhibitors of RNA polymerase II elongation. Interacts (via BC-box) with CUL5.

It is found in the nucleus. In terms of biological role, SIII, also known as elongin, is a general transcription elongation factor that increases the RNA polymerase II transcription elongation past template-encoded arresting sites. Subunit A is transcriptionally active and its transcription activity is strongly enhanced by binding to the dimeric complex of the SIII regulatory subunits B and C (elongin BC complex). Its function is as follows. As part of a multisubunit complex composed of elongin BC complex (ELOB and ELOC), elongin A/ELOA, RBX1 and CUL5; polyubiquitinates monoubiquitinated POLR2A. This chain is Elongin-A (Eloa), found in Rattus norvegicus (Rat).